Reading from the N-terminus, the 300-residue chain is Tegument protein VP22 (300 aa).

The segment at 1 to 148 is disordered; it reads MTSRRSVKSC…PARGRRPAQA (148 aa). Basic and acidic residues-rich tracts occupy residues 10–22 and 50–61; these read CPRE…HEEL and PRGEVRFLHYDE. The Nuclear localization signal motif lies at 163–166; the sequence is GRTK. Residues 174–267 are interaction with gE; sequence KKLHFSTAPP…LVNPDAAQDV (94 aa). The Nuclear export signal motif lies at 232-244; the sequence is LNELLDLTTIRVT. Residues 269–292 show a composition bias toward low complexity; it reads ATAAARGRPAGRAAATARAPARSA. Residues 269–300 are disordered; that stretch reads ATAAARGRPAGRAAATARAPARSASRPRRPLE.

It belongs to the alphaherpesvirinae VP22 tegument protein family. Interacts with gE (via C-terminus); this interaction is necessary for the recruitment of VP22 to the Golgi and its packaging into virions. Interacts with gM (via C-terminus). Interacts with VP16; this interaction allows the formation of a tripartite complex composed of VP16, VP22 and UL41/VHS. Interacts with the capsid-binding protein UL16. Interacts with host CGAS. Highly phosphorylated in the host cell. Packaging is selective for underphosphorylated forms.

The protein resides in the virion tegument. It is found in the host cytoplasm. It localises to the host nucleus. Its subcellular location is the host Golgi apparatus. Tegument protein that plays different roles during the time course of infection. Participates in both the accumulation of viral mRNAs and viral protein translation at late time of infection. Modulates the RNase activity of the virion host shutoff protein UL41 probably to ensure necessary levels of key cellular mRNAs and proteins. Plays a role in microtubule reorganization that occurs after viral infection by stabilizing microtubule network. Plays a role in the inhibition of host innate immune system by targeting the CGAS enzymatic activity which is the principal cytosolic DNA sensor that detects invading viral DNA. Acts by mediating disruption of liquid-like droplets in which CGAS is activated, thereby preventing CGAS activity. The chain is Tegument protein VP22 from Homo sapiens (Human).